We begin with the raw amino-acid sequence, 435 residues long: Adenylosuccinate synthetase (435 aa).

GTP-binding positions include 22–28 (GDEGKGK) and 50–52 (GHT). The Proton acceptor role is filled by Asp-23. Mg(2+)-binding residues include Asp-23 and Gly-50. IMP contacts are provided by residues 23–26 (DEGK), 48–51 (NAGH), Thr-140, Arg-154, Gln-235, Thr-250, and Arg-314. The active-site Proton donor is the His-51. 310-316 (ATTGRKR) contacts substrate. Residues Arg-316, 342–344 (KLD), and 424–426 (SVG) contribute to the GTP site.

It belongs to the adenylosuccinate synthetase family. As to quaternary structure, homodimer. The cofactor is Mg(2+).

The protein resides in the cytoplasm. The enzyme catalyses IMP + L-aspartate + GTP = N(6)-(1,2-dicarboxyethyl)-AMP + GDP + phosphate + 2 H(+). It functions in the pathway purine metabolism; AMP biosynthesis via de novo pathway; AMP from IMP: step 1/2. In terms of biological role, plays an important role in the de novo pathway of purine nucleotide biosynthesis. Catalyzes the first committed step in the biosynthesis of AMP from IMP. This chain is Adenylosuccinate synthetase, found in Chlorobaculum tepidum (strain ATCC 49652 / DSM 12025 / NBRC 103806 / TLS) (Chlorobium tepidum).